The chain runs to 1325 residues: Zinc finger MYM-type protein 6 (1325 aa).

8 MYM-type zinc fingers span residues 113 to 151 (QLFC…PKDV), 163 to 206 (KDFC…RFEV), 213 to 248 (HGLC…SSGP), 296 to 334 (ELFC…QYHL), 342 to 443 (YSFC…KPEL), 451 to 485 (FLFC…KETV), 492 to 531 (KPFC…LVEN), and 538 to 572 (EEFC…SESI). A Phosphoserine modification is found at serine 397. A disordered region spans residues 665-733 (ESTQEDAMKF…NDAELDSPPS (69 aa)). The segment covering 695-706 (PVTQTKATSCKP) has biased composition (polar residues).

As to expression, expressed at high levels in heart, skeletal muscle, kidney and liver.

The protein resides in the nucleus. In terms of biological role, plays a role in the regulation of cell morphology and cytoskeletal organization. The sequence is that of Zinc finger MYM-type protein 6 (ZMYM6) from Homo sapiens (Human).